The chain runs to 102 residues: Small ribosomal subunit protein uS10 (102 aa).

This sequence belongs to the universal ribosomal protein uS10 family. In terms of assembly, part of the 30S ribosomal subunit.

Its function is as follows. Involved in the binding of tRNA to the ribosomes. The chain is Small ribosomal subunit protein uS10 from Treponema pallidum (strain Nichols).